A 320-amino-acid polypeptide reads, in one-letter code: Bifunctional ligase/repressor BirA (320 aa).

The H-T-H motif DNA-binding region spans 22–41; the sequence is GEQLGERLGMSRAAINKHIQ. In terms of domain architecture, BPL/LPL catalytic spans 66-254; it reads LLDADRIHSQ…KLRAALELFE (189 aa). Biotin-binding positions include 89-91, Q112, 116-118, and K183; these read STN and RGR.

Belongs to the biotin--protein ligase family.

The enzyme catalyses biotin + L-lysyl-[protein] + ATP = N(6)-biotinyl-L-lysyl-[protein] + AMP + diphosphate + H(+). Acts both as a biotin--[acetyl-CoA-carboxylase] ligase and a biotin-operon repressor. In the presence of ATP, BirA activates biotin to form the BirA-biotinyl-5'-adenylate (BirA-bio-5'-AMP or holoBirA) complex. HoloBirA can either transfer the biotinyl moiety to the biotin carboxyl carrier protein (BCCP) subunit of acetyl-CoA carboxylase, or bind to the biotin operator site and inhibit transcription of the operon. This is Bifunctional ligase/repressor BirA from Salmonella typhimurium (strain LT2 / SGSC1412 / ATCC 700720).